Here is a 323-residue protein sequence, read N- to C-terminus: Oligodendrocyte transcription factor 2 (323 aa).

Over residues 1 to 13 (MDSDASLVSSRPS) the composition is skewed to polar residues. The interval 1–107 (MDSDASLVSS…KKQMTEPELQ (107 aa)) is disordered. The segment covering 77–93 (SSSSSTSSSTSSAATSS) has biased composition (low complexity). In terms of domain architecture, bHLH spans 108–162 (QLRLKINSRERKRMHDLNIAMDGLREVMPYAHGPSVRKLSKIATLLLARNYILML).

As to quaternary structure, interacts with NKX2-2. Interacts with ZNF488. Expressed specifically in the brain.

It localises to the nucleus. It is found in the cytoplasm. Required for oligodendrocyte and motor neuron specification in the spinal cord, as well as for the development of somatic motor neurons in the hindbrain. Functions together with ZNF488 to promote oligodendrocyte differentiation. Cooperates with OLIG1 to establish the pMN domain of the embryonic neural tube. Antagonist of V2 interneuron and of NKX2-2-induced V3 interneuron development. The chain is Oligodendrocyte transcription factor 2 (Olig2) from Mus musculus (Mouse).